The sequence spans 371 residues: Putative 26S proteasome regulatory subunit homolog MJ1494 (371 aa).

161–168 (GPPGTGKT) is an ATP binding site.

The protein belongs to the AAA ATPase family.

Functionally, the 26S proteasome is involved in the ATP-dependent degradation of ubiquitinated proteins. The regulatory (or ATPase) complex confers ATP dependency and substrate specificity to the 26S complex. In Methanocaldococcus jannaschii (strain ATCC 43067 / DSM 2661 / JAL-1 / JCM 10045 / NBRC 100440) (Methanococcus jannaschii), this protein is Putative 26S proteasome regulatory subunit homolog MJ1494.